Consider the following 378-residue polypeptide: AA13 family lytic polysaccharide monooxygenase A (378 aa).

An N-terminal signal peptide occupies residues 1 to 17 (MKWSVIQALALASGVQA). His18 provides a ligand contact to Cu(2+). At His18 the chain carries Methylhistidine. Positions 18–244 (HGYLTFPMSR…PQIYLTCADI (227 aa)) constitute a Chitin-binding type-4 domain. 7 cysteine pairs are disulfide-bonded: Cys39-Cys42, Cys65-Cys241, Cys101-Cys199, Cys117-Cys144, Cys152-Cys160, Cys166-Cys172, and Cys180-Cys188. Position 108 (His108) interacts with Cu(2+). Residue Asn221 is glycosylated (N-linked (GlcNAc...) asparagine). Residue Tyr238 participates in Cu(2+) binding. Positions 250-263 (DSQSPPTTTTTSTP) are enriched in low complexity. The disordered stretch occupies residues 250–272 (DSQSPPTTTTTSTPASPPPTSCA). One can recognise a CBM20 domain in the interval 272-378 (ATPAASVAVT…GTATVDTAWK (107 aa)).

This sequence belongs to the polysaccharide monooxygenase AA13 family. The cofactor is Cu(2+). Post-translationally, O-mannosylated.

The protein localises to the secreted. It carries out the reaction starch + reduced acceptor + O2 = D-glucono-1,5-lactone-terminated malto-oligosaccharides + short-chain malto-oligosaccharides + acceptor + H2O.. Activity is inhibited by both beta-cyclodextrin or amylose that block the access to the active site. Its function is as follows. Starch-active lytic polysaccharide monooxygenase that oxidizes the C1 position of starch substrates. Catalysis by LPMOs requires the reduction of the active-site copper from Cu(II) to Cu(I) by a reducing agent and H(2)O(2) or O(2) as a cosubstrate. The chain is AA13 family lytic polysaccharide monooxygenase A from Pyricularia oryzae (strain 70-15 / ATCC MYA-4617 / FGSC 8958) (Rice blast fungus).